We begin with the raw amino-acid sequence, 120 residues long: NAD(P)H-quinone oxidoreductase subunit 3, chloroplastic (120 aa).

The next 3 helical transmembrane spans lie at 9–29 (IFWAFLIISSLIPILAFFISG), 64–84 (MFALVFVVFDVETVFLYPWAM), and 88–108 (VLGLSVFLEAFVFVLILIVGL).

Belongs to the complex I subunit 3 family. NDH is composed of at least 16 different subunits, 5 of which are encoded in the nucleus.

It is found in the plastid. The protein localises to the chloroplast thylakoid membrane. The catalysed reaction is a plastoquinone + NADH + (n+1) H(+)(in) = a plastoquinol + NAD(+) + n H(+)(out). It catalyses the reaction a plastoquinone + NADPH + (n+1) H(+)(in) = a plastoquinol + NADP(+) + n H(+)(out). NDH shuttles electrons from NAD(P)H:plastoquinone, via FMN and iron-sulfur (Fe-S) centers, to quinones in the photosynthetic chain and possibly in a chloroplast respiratory chain. The immediate electron acceptor for the enzyme in this species is believed to be plastoquinone. Couples the redox reaction to proton translocation, and thus conserves the redox energy in a proton gradient. The polypeptide is NAD(P)H-quinone oxidoreductase subunit 3, chloroplastic (Jasminum nudiflorum (Winter jasmine)).